The sequence spans 870 residues: MAKKRIYEVAKEVGVDNKVVVQKAKELGFDVKNHMSSIDDAQVAKLKGSFQNSAPAEKNNKIKISVSSIRKNEKKQEDNAGSKKPRRRNNKRLQNNDRNHKNRNDRDHSANSGSGKPKAAALLQQFKQKQRAEEGQLNRQAQKAKKEYHEQLKYPKKEQPVNNKKKTNKESNNKKSEEVEKKVIGPKILKPSPARLKKNQPSTNEKPAVKVSIPEPPKEEKRNNGRGKNMGKPGHKGKNQFFNNHSEQSDRSERKRRKNKNKKRKQEQKPKKQITKRKERPLPETLVYEKGMNAQDIGKLIHREPAEIVKKLFMLGVMTNQNRSLDKDTIELLAAEYGINAKQKVHEDISDIDTLYNKRMEASKKSKNQVKRPPVVTIMGHVDHGKTTLLDRLRHTHVSAHEAGGITQKIGAYQVRLDDRLITFLDTPGHAAFSNMRARGAEITDIVVLVVAADDGVMPQTVEAIDHAKSANVPIIVAINKMDKPGANPQHVTEELMKYNLIPEDYGGDTIFVNISARTGQNVDDLLQMILLQADMMELKANPTEMAIGTVIEARLSRGRGPVADVLIQQGTLNIGDPIVVGDTFGRVRTMTNDRGRQVKKATPSEPVEITGLNDVPESADKLVEFKDEKTARSVGEARAQQALQKSRENVQHVTLDNLFDTMKKENMKEVDIVLKADVQGSVEALQQSLEKIEVEGVRVNIIHSGVGAINESDVTLAGASNAFIIGFNVRPTATAKSQAETEGVDIRLYSIIYKAIDDVTAAMKGMLEPTYEEKVIGNLTVRETWKVSKVGTIAGSFVDKGLVKSDAKIRIIRDGIVKYDGEIASLKRFKDDVKEVKQGNDCGLTIKDYNDIKVGDEFEVYEMQQVEPK.

Positions 49-284 (SFQNSAPAEK…TKRKERPLPE (236 aa)) are disordered. Basic and acidic residues-rich tracts occupy residues 70 to 81 (RKNEKKQEDNAG) and 94 to 109 (QNND…RDHS). Residues 116–127 (KPKAAALLQQFK) show a composition bias toward low complexity. 2 stretches are compositionally biased toward basic and acidic residues: residues 144-159 (AKKE…KKEQ) and 168-183 (NKES…EKKV). Basic residues predominate over residues 254-279 (RKRRKNKNKKRKQEQKPKKQITKRKE). The tr-type G domain maps to 371–540 (KRPPVVTIMG…LLQADMMELK (170 aa)). The interval 380-387 (GHVDHGKT) is G1. 380-387 (GHVDHGKT) provides a ligand contact to GTP. Residues 405-409 (GITQK) form a G2 region. The segment at 426-429 (DTPG) is G3. Residues 426-430 (DTPGH) and 480-483 (NKMD) each bind GTP. The interval 480-483 (NKMD) is G4. A G5 region spans residues 516-518 (SAR).

It belongs to the TRAFAC class translation factor GTPase superfamily. Classic translation factor GTPase family. IF-2 subfamily.

The protein localises to the cytoplasm. Functionally, one of the essential components for the initiation of protein synthesis. Protects formylmethionyl-tRNA from spontaneous hydrolysis and promotes its binding to the 30S ribosomal subunits. Also involved in the hydrolysis of GTP during the formation of the 70S ribosomal complex. The chain is Translation initiation factor IF-2 from Lactobacillus helveticus (strain DPC 4571).